Reading from the N-terminus, the 88-residue chain is Large ribosomal subunit protein bL27 (88 aa).

It belongs to the bacterial ribosomal protein bL27 family.

This Acidobacterium capsulatum (strain ATCC 51196 / DSM 11244 / BCRC 80197 / JCM 7670 / NBRC 15755 / NCIMB 13165 / 161) protein is Large ribosomal subunit protein bL27.